Consider the following 107-residue polypeptide: Pathogenesis-related protein PR-4 (107 aa).

The Barwin domain maps to 1–107 (QNINWDLRTA…VNYDFVDCGD (107 aa)). 3 disulfide bridges follow: Cys-14/Cys-46, Cys-35/Cys-69, and Cys-49/Cys-105.

Preferentially expressed in the tissue surrounding the abscission zone of fruitlets.

It is found in the secreted. It localises to the cell wall. May be involved in protecting plant tissues from pathogen infection. In Prunus persica (Peach), this protein is Pathogenesis-related protein PR-4.